The following is a 134-amino-acid chain: ATP synthase epsilon chain, chloroplastic (134 aa).

This sequence belongs to the ATPase epsilon chain family. F-type ATPases have 2 components, CF(1) - the catalytic core - and CF(0) - the membrane proton channel. CF(1) has five subunits: alpha(3), beta(3), gamma(1), delta(1), epsilon(1). CF(0) has three main subunits: a, b and c.

It localises to the plastid. The protein localises to the chloroplast thylakoid membrane. Produces ATP from ADP in the presence of a proton gradient across the membrane. The protein is ATP synthase epsilon chain, chloroplastic of Phalaenopsis aphrodite subsp. formosana (Moth orchid).